The chain runs to 305 residues: Protoheme IX farnesyltransferase (305 aa).

Transmembrane regions (helical) follow at residues 26–46 (VMSL…QPVN), 47–67 (PFVA…SGAL), 98–118 (LAVG…AANW), 119–139 (FAAG…TIWL), 147–167 (IVIG…CATG), 174–194 (LLMF…LALF), 220–240 (IFAY…TSVG), 243–263 (LYLA…WQIL), and 284–304 (LSLY…WVGG).

This sequence belongs to the UbiA prenyltransferase family. Protoheme IX farnesyltransferase subfamily. As to quaternary structure, interacts with CtaA.

The protein resides in the cell inner membrane. It catalyses the reaction heme b + (2E,6E)-farnesyl diphosphate + H2O = Fe(II)-heme o + diphosphate. The protein operates within porphyrin-containing compound metabolism; heme O biosynthesis; heme O from protoheme: step 1/1. Functionally, converts heme B (protoheme IX) to heme O by substitution of the vinyl group on carbon 2 of heme B porphyrin ring with a hydroxyethyl farnesyl side group. In Paracoccus denitrificans (strain Pd 1222), this protein is Protoheme IX farnesyltransferase.